The sequence spans 217 residues: Mucosal pentraxin (217 aa).

Positions 1-19 (MEKLLLGVLLLAFLPEGMT) are cleaved as a signal peptide. The region spanning 24–217 (RGKVFIFPEQ…KGYVVVKPKL (194 aa)) is the Pentraxin (PTX) domain. An intrachain disulfide couples Cys-55 to Cys-114. Positions 77, 78, 155, 156, 157, and 167 each coordinate Ca(2+).

It belongs to the pentraxin family. Homopentamer. Pentraxin (or pentaxin) have a discoid arrangement of 5 non-covalently bound subunits. The cofactor is Ca(2+).

The protein localises to the secreted. This chain is Mucosal pentraxin (MPTX), found in Bos taurus (Bovine).